Reading from the N-terminus, the 233-residue chain is Thymidylate kinase (233 aa).

10–17 (GVDGVGKT) is an ATP binding site.

It belongs to the thymidylate kinase family.

The enzyme catalyses dTMP + ATP = dTDP + ADP. Functionally, phosphorylation of dTMP to form dTDP in both de novo and salvage pathways of dTTP synthesis. In Bifidobacterium longum subsp. infantis (strain ATCC 15697 / DSM 20088 / JCM 1222 / NCTC 11817 / S12), this protein is Thymidylate kinase.